Consider the following 106-residue polypeptide: uncharacterized protein (106 aa).

Transmembrane regions (helical) follow at residues Ala-17–Val-37 and Phe-55–Phe-75.

It is found in the membrane. This is an uncharacterized protein from Saccharomyces cerevisiae (strain ATCC 204508 / S288c) (Baker's yeast).